Here is a 152-residue protein sequence, read N- to C-terminus: Transcriptional regulator MraZ (152 aa).

2 consecutive SpoVT-AbrB domains span residues 5–52 and 81–124; these read ASAI…PLDE and AHEC…DEAA.

This sequence belongs to the MraZ family. Forms oligomers.

Its subcellular location is the cytoplasm. It localises to the nucleoid. The protein is Transcriptional regulator MraZ of Shewanella violacea (strain JCM 10179 / CIP 106290 / LMG 19151 / DSS12).